The primary structure comprises 67 residues: Large ribosomal subunit protein bL35 (67 aa).

It belongs to the bacterial ribosomal protein bL35 family.

In Bartonella tribocorum (strain CIP 105476 / IBS 506), this protein is Large ribosomal subunit protein bL35.